A 188-amino-acid polypeptide reads, in one-letter code: Gamma-glutamylcyclotransferase (188 aa).

19 to 22 is a binding site for substrate; the sequence is YFAY. Glu98 (proton acceptor) is an active-site residue. At Ser173 the chain carries Phosphoserine.

The protein belongs to the gamma-glutamylcyclotransferase family. In terms of assembly, homodimer.

The catalysed reaction is an alpha-(gamma-L-glutamyl)-L-amino acid = 5-oxo-L-proline + an L-alpha-amino acid. Its function is as follows. Catalyzes the formation of 5-oxoproline from gamma-glutamyl dipeptides and may play a significant role in glutathione homeostasis. Induces release of cytochrome c from mitochondria with resultant induction of apoptosis. The sequence is that of Gamma-glutamylcyclotransferase (Ggct) from Mus musculus (Mouse).